Here is a 289-residue protein sequence, read N- to C-terminus: Elongation factor Ts (289 aa).

Residues 80–83 (TDFV) form an involved in Mg(2+) ion dislocation from EF-Tu region.

Belongs to the EF-Ts family.

Its subcellular location is the cytoplasm. Its function is as follows. Associates with the EF-Tu.GDP complex and induces the exchange of GDP to GTP. It remains bound to the aminoacyl-tRNA.EF-Tu.GTP complex up to the GTP hydrolysis stage on the ribosome. This Francisella tularensis subsp. holarctica (strain LVS) protein is Elongation factor Ts.